A 465-amino-acid polypeptide reads, in one-letter code: MTIHIYNTLTRQKEEFIPLEEKKVKMYVCGPTVYNYIHIGNARPPMVFDTVRRYLEHKGYDVQYVSNFTDVDDKLIKAANELGEDVPTIAERFIEAYFEDVTALGCKHATVHPRVTENMDIIIEFIQELVNKGYAYESEGDVYYRTKEFEGYGKLSHQAIEDLRHGARIEVGEKKQDPLDFALWKAAKEGEIFWESPWGKGRPGWHIECSAMARKYLGDSIDIHAGGQDLSFPHHENEIAQSEALTGKPFARYWMHNGYININNEKMSKSLGNFILVHDIIKQYDPQLIRFFMLSVHYRHPINFSEELLQSTNNGLERIKTTYRNLKHRIESSTDLTDHNEKWLAEMKEFQSAFEAAMDDDFNTANAITELYNLANHANQYLLEEHTSKVVIEAYINQLEMLFRILGLVFTKEELLDKEIEALIQKRIEARKNRDFALADKIRDDLKERNIILEDTAQGTRWKRG.

Zn(2+) is bound at residue cysteine 29. The short motif at 31 to 41 (PTVYNYIHIGN) is the 'HIGH' region element. The Zn(2+) site is built by cysteine 209, histidine 234, and glutamate 238. Residues 266 to 270 (KMSKS) carry the 'KMSKS' region motif. Residue lysine 269 participates in ATP binding. Serine 270 is modified (phosphoserine).

This sequence belongs to the class-I aminoacyl-tRNA synthetase family. In terms of assembly, monomer. Zn(2+) serves as cofactor.

The protein resides in the cytoplasm. It carries out the reaction tRNA(Cys) + L-cysteine + ATP = L-cysteinyl-tRNA(Cys) + AMP + diphosphate. This is Cysteine--tRNA ligase from Bacillus cytotoxicus (strain DSM 22905 / CIP 110041 / 391-98 / NVH 391-98).